The following is a 266-amino-acid chain: Diphthine synthase (266 aa).

S-adenosyl-L-methionine contacts are provided by residues Leu-9, Asp-85, Ile-88, 113–114 (TA), Leu-168, Ala-210, and His-235.

The protein belongs to the diphthine synthase family. In terms of assembly, homodimer.

It carries out the reaction 2-[(3S)-amino-3-carboxypropyl]-L-histidyl-[translation elongation factor 2] + 3 S-adenosyl-L-methionine = diphthine-[translation elongation factor 2] + 3 S-adenosyl-L-homocysteine + 3 H(+). It functions in the pathway protein modification; peptidyl-diphthamide biosynthesis. Its function is as follows. S-adenosyl-L-methionine-dependent methyltransferase that catalyzes the trimethylation of the amino group of the modified target histidine residue in translation elongation factor 2 (EF-2), to form an intermediate called diphthine. The three successive methylation reactions represent the second step of diphthamide biosynthesis. The sequence is that of Diphthine synthase from Natronomonas pharaonis (strain ATCC 35678 / DSM 2160 / CIP 103997 / JCM 8858 / NBRC 14720 / NCIMB 2260 / Gabara) (Halobacterium pharaonis).